The following is a 437-amino-acid chain: Mitochondrial distribution and morphology protein 12 (437 aa).

The region spanning 1 to 437 is the SMP-LTD domain; sequence MSIDINWRTA…VYPSFWTFLI (437 aa). Residues 73-85 show a composition bias toward acidic residues; it reads DDDADTSDVSEDL. Disordered stretches follow at residues 73–101, 187–274, and 354–384; these read DDDADTSDVSEDLLSEHSSQWDRTHSELN, SDSG…PPRM, and SEQQQESGGDDHRPRSGADSSAHTSQKRQGG. The segment covering 91–101 has biased composition (basic and acidic residues); the sequence is SQWDRTHSELN. Polar residues-rich tracts occupy residues 215-240 and 371-381; these read DTSNSTSRPSTANTLPSHLSESNNLN and ADSSAHTSQKR.

This sequence belongs to the MDM12 family. In terms of assembly, component of the ER-mitochondria encounter structure (ERMES) or MDM complex, composed of mmm1, mdm10, mdm12 and mdm34. A mmm1 homodimer associates with one molecule of mdm12 on each side in a pairwise head-to-tail manner, and the SMP-LTD domains of mmm1 and mdm12 generate a continuous hydrophobic tunnel for phospholipid trafficking.

It is found in the mitochondrion outer membrane. Its subcellular location is the endoplasmic reticulum membrane. Functionally, component of the ERMES/MDM complex, which serves as a molecular tether to connect the endoplasmic reticulum (ER) and mitochondria. Components of this complex are involved in the control of mitochondrial shape and protein biogenesis, and function in nonvesicular lipid trafficking between the ER and mitochondria. Mdm12 is required for the interaction of the ER-resident membrane protein mmm1 and the outer mitochondrial membrane-resident beta-barrel protein mdm10. The mdm12-mmm1 subcomplex functions in the major beta-barrel assembly pathway that is responsible for biogenesis of all mitochondrial outer membrane beta-barrel proteins, and acts in a late step after the SAM complex. The mdm10-mdm12-mmm1 subcomplex further acts in the TOM40-specific pathway after the action of the mdm12-mmm1 complex. Essential for establishing and maintaining the structure of mitochondria and maintenance of mtDNA nucleoids. The sequence is that of Mitochondrial distribution and morphology protein 12 from Aspergillus clavatus (strain ATCC 1007 / CBS 513.65 / DSM 816 / NCTC 3887 / NRRL 1 / QM 1276 / 107).